The sequence spans 343 residues: Glyceraldehyde-3-phosphate dehydrogenase (343 aa).

Residues 13–14 (TI) and glycine 111 contribute to the NAD(+) site. 140 to 142 (SCN) is a D-glyceraldehyde 3-phosphate binding site. Residue cysteine 141 is the Nucleophile of the active site. Residue arginine 169 participates in NAD(+) binding. 195 to 196 (HA) provides a ligand contact to D-glyceraldehyde 3-phosphate. Glutamine 303 is a binding site for NAD(+).

It belongs to the glyceraldehyde-3-phosphate dehydrogenase family. In terms of assembly, homotetramer.

The protein resides in the cytoplasm. The enzyme catalyses D-glyceraldehyde 3-phosphate + phosphate + NADP(+) = (2R)-3-phospho-glyceroyl phosphate + NADPH + H(+). It catalyses the reaction D-glyceraldehyde 3-phosphate + phosphate + NAD(+) = (2R)-3-phospho-glyceroyl phosphate + NADH + H(+). It functions in the pathway carbohydrate degradation; glycolysis; pyruvate from D-glyceraldehyde 3-phosphate: step 1/5. This Sulfurisphaera tokodaii (strain DSM 16993 / JCM 10545 / NBRC 100140 / 7) (Sulfolobus tokodaii) protein is Glyceraldehyde-3-phosphate dehydrogenase.